Here is a 274-residue protein sequence, read N- to C-terminus: Penicillin-insensitive murein endopeptidase (274 aa).

An N-terminal signal peptide occupies residues 1 to 19 (MNKTAIALLALLASSVSLA). 3 disulfides stabilise this stretch: C44–C265, C187–C235, and C216–C223. H110, H113, D120, D147, H150, and H211 together coordinate Zn(2+). Residues 227-274 (PLPPPGDGCGAELQSWFEPPKPGTTKPEKKTPPPLPPSCQALLDEHVI) are disordered.

This sequence belongs to the peptidase M74 family. In terms of assembly, dimer. It depends on Zn(2+) as a cofactor.

It is found in the periplasm. Its function is as follows. Murein endopeptidase that cleaves the D-alanyl-meso-2,6-diamino-pimelyl amide bond that connects peptidoglycan strands. Likely plays a role in the removal of murein from the sacculus. The polypeptide is Penicillin-insensitive murein endopeptidase (Escherichia coli O157:H7).